Consider the following 317-residue polypeptide: Acetyl-coenzyme A carboxylase carboxyl transferase subunit beta (317 aa).

Positions 30–299 (LWTKCVACTA…VLPPLNVREK (270 aa)) constitute a CoA carboxyltransferase N-terminal domain. The Zn(2+) site is built by cysteine 34, cysteine 37, cysteine 53, and cysteine 56. The C4-type zinc finger occupies 34 to 56 (CVACTALTYTKDLQANQLVCTEC).

It belongs to the AccD/PCCB family. In terms of assembly, acetyl-CoA carboxylase is a heterohexamer composed of biotin carboxyl carrier protein (AccB), biotin carboxylase (AccC) and two subunits each of ACCase subunit alpha (AccA) and ACCase subunit beta (AccD). Requires Zn(2+) as cofactor.

The protein localises to the cytoplasm. It catalyses the reaction N(6)-carboxybiotinyl-L-lysyl-[protein] + acetyl-CoA = N(6)-biotinyl-L-lysyl-[protein] + malonyl-CoA. Its pathway is lipid metabolism; malonyl-CoA biosynthesis; malonyl-CoA from acetyl-CoA: step 1/1. Component of the acetyl coenzyme A carboxylase (ACC) complex. Biotin carboxylase (BC) catalyzes the carboxylation of biotin on its carrier protein (BCCP) and then the CO(2) group is transferred by the transcarboxylase to acetyl-CoA to form malonyl-CoA. The chain is Acetyl-coenzyme A carboxylase carboxyl transferase subunit beta from Crocosphaera subtropica (strain ATCC 51142 / BH68) (Cyanothece sp. (strain ATCC 51142)).